A 449-amino-acid polypeptide reads, in one-letter code: Histone-lysine N-methyltransferase SET5 (449 aa).

One can recognise an SET domain in the interval 93-410 (PKVEVKMFAG…PGEELTISYV (318 aa)).

It belongs to the class V-like SAM-binding methyltransferase superfamily. Histone-lysine methyltransferase family. SET5 subfamily.

It localises to the nucleus. Its subcellular location is the chromosome. The protein resides in the cytoplasm. The catalysed reaction is L-lysyl-[histone] + S-adenosyl-L-methionine = N(6)-methyl-L-lysyl-[histone] + S-adenosyl-L-homocysteine + H(+). Functionally, histone methyltransferase that monomethylates 'Lys-5', 'Lys-8' and 'Lys-12' of histone H4 (H4K5me1, H4K8me1 and H4K12me1, respectively), thereby controlling gene expression and remodeling chromatin structures. The polypeptide is Histone-lysine N-methyltransferase SET5 (SET5) (Cryptococcus neoformans var. neoformans serotype D (strain B-3501A) (Filobasidiella neoformans)).